Here is a 151-residue protein sequence, read N- to C-terminus: Nucleoside diphosphate kinase (151 aa).

ATP is bound by residues K9, F57, R86, T92, R103, and N113. H116 (pros-phosphohistidine intermediate) is an active-site residue.

It belongs to the NDK family. Homotetramer. Requires Mg(2+) as cofactor.

It is found in the cytoplasm. It carries out the reaction a 2'-deoxyribonucleoside 5'-diphosphate + ATP = a 2'-deoxyribonucleoside 5'-triphosphate + ADP. The enzyme catalyses a ribonucleoside 5'-diphosphate + ATP = a ribonucleoside 5'-triphosphate + ADP. In terms of biological role, major role in the synthesis of nucleoside triphosphates other than ATP. The ATP gamma phosphate is transferred to the NDP beta phosphate via a ping-pong mechanism, using a phosphorylated active-site intermediate. This Chloroflexus aggregans (strain MD-66 / DSM 9485) protein is Nucleoside diphosphate kinase.